Here is a 238-residue protein sequence, read N- to C-terminus: Ribitol-5-phosphate cytidylyltransferase (238 aa).

CTP is bound by residues 7 to 10 and 81 to 87; these read LAGG and GDDRNHS.

The protein belongs to the IspD/TarI cytidylyltransferase family. TarI subfamily.

The catalysed reaction is D-ribitol 5-phosphate + CTP + H(+) = CDP-L-ribitol + diphosphate. The protein operates within cell wall biogenesis; poly(ribitol phosphate) teichoic acid biosynthesis. Functionally, catalyzes the transfer of the cytidylyl group of CTP to D-ribitol 5-phosphate. The protein is Ribitol-5-phosphate cytidylyltransferase of Staphylococcus epidermidis (strain ATCC 12228 / FDA PCI 1200).